We begin with the raw amino-acid sequence, 301 residues long: MGAQLSTLGHMVLFPVWFLYSLLMKLFQRSTPAITLESPDIKYPLRLIDREIISHDTRRFRFALPSPQHILGLPVGQHIYLSARIDGNLVVRPYTPISSDDDKGFVDLVIKVYFKDTHPKFPAGGKMSQYLESMQIGDTIEFRGPSGLLVYQGKGKFAIRPDKKSNPIIRTVKSVGMIAGGTGITPMLQVIRAIMKDPDDHTVCHLLFANQTEKDILLRPELEELRNKHSARFKLWYTLDRAPEAWDYGQGFVNEEMIRDHLPPPEEEPLVLMCGPPPMIQYACLPNLDHVGHPTERCFVF.

G2 carries N-myristoyl glycine lipidation. The region spanning 40 to 152 (DIKYPLRLID…RGPSGLLVYQ (113 aa)) is the FAD-binding FR-type domain. Position 42 is an N6-acetyllysine (K42). The residue at position 43 (Y43) is a Phosphotyrosine. Residues R92, P93, Y94, V109, K111, and F114 each coordinate FAD. N6-acetyllysine is present on K120. The FAD site is built by K126, M127, S128, and T185.

It belongs to the flavoprotein pyridine nucleotide cytochrome reductase family. As to quaternary structure, component of a complex composed of cytochrome b5, NADH-cytochrome b5 reductase (CYB5R3) and MTARC2. Interacts with MTLN; the interaction is required to maintain cellular lipid composition and leads to stimulation of mitochondrial respiratory complex I activity. It depends on FAD as a cofactor. In terms of tissue distribution, expressed at late stages of erythroid maturation.

The protein resides in the endoplasmic reticulum membrane. Its subcellular location is the mitochondrion outer membrane. The protein localises to the cytoplasm. It carries out the reaction 2 Fe(III)-[cytochrome b5] + NADH = 2 Fe(II)-[cytochrome b5] + NAD(+) + H(+). In terms of biological role, catalyzes the reduction of two molecules of cytochrome b5 using NADH as the electron donor. This chain is NADH-cytochrome b5 reductase 3, found in Homo sapiens (Human).